The following is a 454-amino-acid chain: Allantoinase (454 aa).

6 residues coordinate Zn(2+): H59, H61, K150, H190, H246, and D319. Position 150 is an N6-carboxylysine (K150).

The protein belongs to the metallo-dependent hydrolases superfamily. Allantoinase family. As to quaternary structure, homotetramer. Requires Zn(2+) as cofactor. In terms of processing, carboxylation allows a single lysine to coordinate two zinc ions.

The catalysed reaction is (S)-allantoin + H2O = allantoate + H(+). Its pathway is nitrogen metabolism; (S)-allantoin degradation; allantoate from (S)-allantoin: step 1/1. Catalyzes the conversion of allantoin (5-ureidohydantoin) to allantoic acid by hydrolytic cleavage of the five-member hydantoin ring. This Bacillus licheniformis (strain ATCC 14580 / DSM 13 / JCM 2505 / CCUG 7422 / NBRC 12200 / NCIMB 9375 / NCTC 10341 / NRRL NRS-1264 / Gibson 46) protein is Allantoinase.